The sequence spans 1004 residues: Liprin-beta homolog (1004 aa).

Composition is skewed to low complexity over residues 50 to 63 (NGNS…TIGS) and 149 to 161 (SPPS…SSSL). Disordered stretches follow at residues 50-122 (NGNS…RSSR) and 135-161 (HRTD…SSSL). Coiled-coil stretches lie at residues 280-328 (CQEL…VNQS) and 364-396 (DEMS…ALDE). Disordered stretches follow at residues 341-366 (HTNG…DDEM), 432-497 (PSDS…GGNQ), 528-550 (NGNE…GKAS), and 648-686 (FSKL…LGTV). Over residues 434 to 453 (DSMSHSTSFPVSLSSTTSNG) the composition is skewed to polar residues. Residues 458–474 (STVQSSSSYNSSLSAVS) show a composition bias toward low complexity. 2 stretches are compositionally biased toward polar residues: residues 531–541 (EGANHNYSSAS) and 648–684 (FSKL…NHLG). SAM domains lie at 698-762 (WRSE…IEED), 770-833 (WDVH…LKKA), and 858-930 (VVRW…LLGP).

It belongs to the liprin family. Liprin-beta subfamily. Expressed in pharyngeal muscle, particularly posterior bulb, adjacent to the dorsal and ventral cord (but not in ventral cord neurons), and in body wall muscles.

In terms of biological role, involved in the regulation of synaptic function at neuromuscular junctions. Together with the liprin-alpha protein syd-2, may play a role in regulating the structure of the neuronal region, called the active zone, from which synaptic vesicles send neurotransmitter signals across the synapse. Does not seem to be required for neuronal development. May regulate the disassembly of focal adhesions. Does not bind receptor-like tyrosine phosphatases type 2A. The protein is Liprin-beta homolog of Caenorhabditis elegans.